We begin with the raw amino-acid sequence, 478 residues long: D(1B) dopamine receptor (478 aa).

Topologically, residues 1–38 are extracellular; the sequence is MLPPGRNGTAHRARLGLQRQLAQVDAPGGSAAPLGPAQ. N7 is a glycosylation site (N-linked (GlcNAc...) asparagine). The helical transmembrane segment at 39–64 threads the bilayer; the sequence is VVTAGLLTLLIVWTLLGNVLVCAAIV. The Cytoplasmic portion of the chain corresponds to 65–75; the sequence is RSRHLRAKMTN. Residues 76-102 traverse the membrane as a helical segment; the sequence is IFIVSLAVSDLFVALLVMPWKAVAEVA. The Extracellular segment spans residues 103 to 111; it reads GYWPFGAFC. A disulfide bridge connects residues C111 and C211. Residues 112–134 form a helical membrane-spanning segment; the sequence is DIWVAFDIMCSTASILNLCIISV. Over 135-153 the chain is Cytoplasmic; the sequence is DRYWAISRPFRYERKMTQR. The chain crosses the membrane as a helical span at residues 154–179; the sequence is VALVMVALAWTLSILISFIPVQLNWH. At 180–215 the chain is on the extracellular side; the sequence is RDKAGSQGREGLLSNETPWEEGWELDGRTENCDSSL. The helical transmembrane segment at 216–240 threads the bilayer; the sequence is NRTYAISSSLISFYIPVAIMIVTYT. The Cytoplasmic segment spans residues 241-289; sequence RIYRIAQVQIRRISSLERAAEHAQSCRSRGACEPDPSLRASIKKETKVF. A helical transmembrane segment spans residues 290-317; it reads KTLSVIMGVFVCCWLPFFILNCMVPFCS. The Extracellular portion of the chain corresponds to 318–335; sequence SGDAQGPRTGFPCVSETT. A helical transmembrane segment spans residues 336–357; that stretch reads FDIFVWFGWANSSLNPIIYAFN. At 358 to 478 the chain is on the cytoplasmic side; that stretch reads ADFRKVFAQL…LTPNCFHKTA (121 aa). A lipid anchor (S-palmitoyl cysteine) is attached at C370. The disordered stretch occupies residues 416 to 446; sequence GDREVGEEEEAEEEGPFDHMSQISPTTPDGD. The segment covering 420–430 has biased composition (acidic residues); that stretch reads VGEEEEAEEEG.

The protein belongs to the G-protein coupled receptor 1 family.

Its subcellular location is the cell membrane. Its function is as follows. Dopamine receptor whose activity is mediated by G proteins which activate adenylyl cyclase. The chain is D(1B) dopamine receptor (Drd5) from Mus musculus (Mouse).